Consider the following 148-residue polypeptide: uncharacterized protein (148 aa).

This is an uncharacterized protein from Schizosaccharomyces pombe (strain 972 / ATCC 24843) (Fission yeast).